A 53-amino-acid chain; its full sequence is Rho GTPase-activating protein 6 (53 aa).

Its subcellular location is the cytoplasm. In terms of biological role, GTPase activator for the Rho-type GTPases by converting them to an inactive GDP-bound state. Could regulate the interactions of signaling molecules with the actin cytoskeleton. Promotes continuous elongation of cytoplasmic processes during cell motility and simultaneous retraction of the cell body changing the cell morphology. This is Rho GTPase-activating protein 6 (arhgap6) from Takifugu rubripes (Japanese pufferfish).